We begin with the raw amino-acid sequence, 300 residues long: MAGIPEVVAMDCEMVGLGPQRVSGLARCSIVNIHGAVLYDKYIRPEGEITDYRTQVSGVTPQHMVRATPFGEARLEILQLLKGKLVVGHDLKHDFNALKEDMSKYTIYDTSTDRLLWHEAKLQYYSRVSLRLLCKRLLHKNIQVLPGSLLGVGGCILPGTDILHLLLYVGMVRIADLRLLTPFLPPSCLACPLLPESLASARSHAVISALSSSSHLLTPLPNPSQGPQGHVDRLSGQLQDWGGSPLAPALPVSAEQLAGPLLCGRCQGHNGALQNLSATQSPARAALPWDVRLNFILIQG.

Aspartate 11, glutamate 13, aspartate 90, and histidine 93 together coordinate Mn(2+).

This sequence belongs to the exonuclease superfamily. As to quaternary structure, associates with PML and SP100 in the PML NB complex. Associates with survival motor neuron protein (SMN)-containing macromolecular nuclear complexes and U1 and U2 snRNAs and U3 snoRNA. Mn(2+) is required as a cofactor.

The protein localises to the nucleus. It is found in the nucleolus. The protein resides in the cytoplasm. Its subcellular location is the cajal body. It localises to the P-body. The catalysed reaction is Exonucleolytic cleavage in the 3'- to 5'-direction to yield nucleoside 5'-phosphates.. In terms of biological role, interferon-induced antiviral exoribonuclease that acts mainly on single-stranded RNA. Inhibition of several viruses does not involve the degradation of viral RNAs, but rather the inhibition of translation of viral proteins. Exerts a translational control over a large panel of non-self RNA substrates while sparing endogenous transcripts. This activity correlates with the protein's ability to localize in cytoplasmic processing bodies. May also act as master regulator of over hundred interferon stimulated genes leading to viral genome translation inhibition. May play additional roles in the maturation of snRNAs and rRNAs, and in ribosome biogenesis. The protein is Interferon-stimulated gene 20 kDa protein (Isg20) of Mus musculus (Mouse).